Consider the following 196-residue polypeptide: Probable malonic semialdehyde reductase RutE (196 aa).

The protein belongs to the nitroreductase family. HadB/RutE subfamily. FMN is required as a cofactor.

The enzyme catalyses 3-hydroxypropanoate + NADP(+) = 3-oxopropanoate + NADPH + H(+). Its function is as follows. May reduce toxic product malonic semialdehyde to 3-hydroxypropionic acid, which is excreted. The sequence is that of Probable malonic semialdehyde reductase RutE from Escherichia coli O139:H28 (strain E24377A / ETEC).